The primary structure comprises 188 residues: Molybdopterin synthase catalytic subunit (188 aa).

A compositionally biased stretch (polar residues) spans 1 to 10 (MSTSETSSYT). The disordered stretch occupies residues 1–21 (MSTSETSSYTPDIPSEPVTKT). Residues 123 to 124 (HR), K139, and 146 to 148 (KLE) contribute to the substrate site.

The protein belongs to the MoaE family. MOCS2B subfamily. Heterotetramer; composed of 2 small (MOCS2A) and 2 large (MOCS2B) subunits.

Its subcellular location is the cytoplasm. It catalyses the reaction 2 [molybdopterin-synthase sulfur-carrier protein]-C-terminal-Gly-aminoethanethioate + cyclic pyranopterin phosphate + H2O = molybdopterin + 2 [molybdopterin-synthase sulfur-carrier protein]-C-terminal Gly-Gly + 2 H(+). Its pathway is cofactor biosynthesis; molybdopterin biosynthesis. Its function is as follows. Catalytic subunit of the molybdopterin synthase complex, a complex that catalyzes the conversion of precursor Z into molybdopterin. Acts by mediating the incorporation of 2 sulfur atoms from thiocarboxylated MOCS2A into precursor Z to generate a dithiolene group. The chain is Molybdopterin synthase catalytic subunit from Phaeosphaeria nodorum (strain SN15 / ATCC MYA-4574 / FGSC 10173) (Glume blotch fungus).